A 231-amino-acid chain; its full sequence is Cytidylate kinase (231 aa).

Position 16 to 24 (16 to 24) interacts with ATP; that stretch reads GPAASGKST. Residues 176–205 are disordered; that stretch reads PDLDSLEQEITKRDRDDAEREHAPLKKHPE. A compositionally biased stretch (basic and acidic residues) spans 184–205; that stretch reads EITKRDRDDAEREHAPLKKHPE.

It belongs to the cytidylate kinase family. Type 1 subfamily.

The protein localises to the cytoplasm. It catalyses the reaction CMP + ATP = CDP + ADP. It carries out the reaction dCMP + ATP = dCDP + ADP. This Pelodictyon phaeoclathratiforme (strain DSM 5477 / BU-1) protein is Cytidylate kinase.